A 447-amino-acid polypeptide reads, in one-letter code: Glutamate--tRNA ligase 1 (447 aa).

The short motif at 10–20 (PSPTGMLHVGN) is the 'HIGH' region element. A 'KMSKS' region motif is present at residues 240–244 (KISKR). Lys243 lines the ATP pocket.

Belongs to the class-I aminoacyl-tRNA synthetase family. Glutamate--tRNA ligase type 1 subfamily. Monomer.

The protein resides in the cytoplasm. The enzyme catalyses tRNA(Glu) + L-glutamate + ATP = L-glutamyl-tRNA(Glu) + AMP + diphosphate. In terms of biological role, catalyzes the attachment of glutamate to tRNA(Glu) in a two-step reaction: glutamate is first activated by ATP to form Glu-AMP and then transferred to the acceptor end of tRNA(Glu). In Rickettsia prowazekii (strain Madrid E), this protein is Glutamate--tRNA ligase 1.